Reading from the N-terminus, the 59-residue chain is Large ribosomal subunit protein uL30 (59 aa).

The protein belongs to the universal ribosomal protein uL30 family. In terms of assembly, part of the 50S ribosomal subunit.

This Buchnera aphidicola subsp. Acyrthosiphon kondoi (Acyrthosiphon kondoi symbiotic bacterium) protein is Large ribosomal subunit protein uL30.